Reading from the N-terminus, the 629-residue chain is tRNA uridine 5-carboxymethylaminomethyl modification enzyme MnmG (629 aa).

FAD is bound by residues 14-19 (GAGHAG), Val126, and Ser181. NAD(+) is bound at residue 273-287 (GPRYCPSIEDKVVRF). An FAD-binding site is contributed by Gln370.

It belongs to the MnmG family. In terms of assembly, homodimer. Heterotetramer of two MnmE and two MnmG subunits. FAD is required as a cofactor.

It localises to the cytoplasm. Functionally, NAD-binding protein involved in the addition of a carboxymethylaminomethyl (cmnm) group at the wobble position (U34) of certain tRNAs, forming tRNA-cmnm(5)s(2)U34. The chain is tRNA uridine 5-carboxymethylaminomethyl modification enzyme MnmG from Bacillus cereus (strain ZK / E33L).